Reading from the N-terminus, the 323-residue chain is Methionyl-tRNA formyltransferase (323 aa).

113–116 (SLLP) provides a ligand contact to (6S)-5,6,7,8-tetrahydrofolate.

It belongs to the Fmt family.

It catalyses the reaction L-methionyl-tRNA(fMet) + (6R)-10-formyltetrahydrofolate = N-formyl-L-methionyl-tRNA(fMet) + (6S)-5,6,7,8-tetrahydrofolate + H(+). Functionally, attaches a formyl group to the free amino group of methionyl-tRNA(fMet). The formyl group appears to play a dual role in the initiator identity of N-formylmethionyl-tRNA by promoting its recognition by IF2 and preventing the misappropriation of this tRNA by the elongation apparatus. The polypeptide is Methionyl-tRNA formyltransferase (Nitrosococcus oceani (strain ATCC 19707 / BCRC 17464 / JCM 30415 / NCIMB 11848 / C-107)).